Reading from the N-terminus, the 645-residue chain is Rab11 family-interacting protein 5 (645 aa).

A C2 domain is found at 1–146 (MALVRDPEPA…AGRAQHTQWY (146 aa)). Phosphoserine occurs at positions 176, 283, 286, 307, 357, and 367. The disordered stretch occupies residues 271–299 (GAELLTRSPSHSSWLSTEGGRDSIQSPKL). Residues 277–286 (RSPSHSSWLS) are compositionally biased toward polar residues. The segment at 341–550 (SHVYNEEPQP…STALSSGLER (210 aa)) is disordered. The span at 357–374 (SISGPFPPSSSLHSVPPR) shows a compositional bias: low complexity. Positions 375-387 (SSEEGSRSSDDSW) are enriched in basic and acidic residues. Ser-391 and Ser-395 each carry phosphoserine. Positions 452–463 (RMGLFHHHHHQG) are enriched in basic residues. A phosphoserine mark is found at Ser-486, Ser-530, Ser-539, Ser-545, and Ser-640. Residues 578–640 (KDSAVLDQSA…ETSPTLLQIS (63 aa)) form the FIP-RBD domain.

In terms of assembly, interacts with RAB11FIP4. Interacts with NAPG. Interacts with RO60. Interacts with RAB11A that has been activated by GTP binding. Phosphorylated on serine and threonine residues. Phosphorylation at Ser-357 is PKA-dependent.

It localises to the cytoplasm. Its subcellular location is the recycling endosome membrane. The protein resides in the early endosome membrane. The protein localises to the golgi apparatus membrane. It is found in the cytoplasmic vesicle. It localises to the secretory vesicle membrane. Its subcellular location is the mitochondrion membrane. Rab effector involved in protein trafficking from apical recycling endosomes to the apical plasma membrane. Involved in insulin granule exocytosis. May regulate V-ATPase intracellular transport in response to extracellular acidosis. The chain is Rab11 family-interacting protein 5 from Mus musculus (Mouse).